An 89-amino-acid polypeptide reads, in one-letter code: Large ribosomal subunit protein bL27 (89 aa).

The tract at residues 1-26 (MAHKKAGGSSRNGRDSAGQRRGVKRF) is disordered.

Belongs to the bacterial ribosomal protein bL27 family.

This Nitratidesulfovibrio vulgaris (strain DSM 19637 / Miyazaki F) (Desulfovibrio vulgaris) protein is Large ribosomal subunit protein bL27.